Here is a 172-residue protein sequence, read N- to C-terminus: Adenine phosphoribosyltransferase (172 aa).

Belongs to the purine/pyrimidine phosphoribosyltransferase family. In terms of assembly, homodimer.

Its subcellular location is the cytoplasm. It catalyses the reaction AMP + diphosphate = 5-phospho-alpha-D-ribose 1-diphosphate + adenine. Its pathway is purine metabolism; AMP biosynthesis via salvage pathway; AMP from adenine: step 1/1. Functionally, catalyzes a salvage reaction resulting in the formation of AMP, that is energically less costly than de novo synthesis. This chain is Adenine phosphoribosyltransferase, found in Pelobacter propionicus (strain DSM 2379 / NBRC 103807 / OttBd1).